The sequence spans 264 residues: Hemin import ATP-binding protein HmuV (264 aa).

An ABC transporter domain is found at 2-241; that stretch reads IEVSGVSVRL…ETMLSVFGLR (240 aa). An ATP-binding site is contributed by 34–41; it reads GPNGSGKT.

The protein belongs to the ABC transporter superfamily. Heme (hemin) importer (TC 3.A.1.14.5) family. The complex is composed of two ATP-binding proteins (HmuV), two transmembrane proteins (HmuU) and a solute-binding protein (HmuT).

The protein localises to the cell inner membrane. Its function is as follows. Part of the ABC transporter complex HmuTUV involved in hemin import. Responsible for energy coupling to the transport system. This Rhizobium leguminosarum protein is Hemin import ATP-binding protein HmuV.